The primary structure comprises 425 residues: Glutamyl-tRNA reductase (425 aa).

Substrate is bound by residues 49–52 (TCNR), Ser109, 114–116 (EGQ), and Gln120. The active-site Nucleophile is the Cys50. Residue 189–194 (GAGETG) coordinates NADP(+).

This sequence belongs to the glutamyl-tRNA reductase family. As to quaternary structure, homodimer.

The enzyme catalyses (S)-4-amino-5-oxopentanoate + tRNA(Glu) + NADP(+) = L-glutamyl-tRNA(Glu) + NADPH + H(+). It functions in the pathway porphyrin-containing compound metabolism; protoporphyrin-IX biosynthesis; 5-aminolevulinate from L-glutamyl-tRNA(Glu): step 1/2. The protein operates within porphyrin-containing compound metabolism; chlorophyll biosynthesis. Catalyzes the NADPH-dependent reduction of glutamyl-tRNA(Glu) to glutamate 1-semialdehyde (GSA). The protein is Glutamyl-tRNA reductase of Chlorobium phaeovibrioides (strain DSM 265 / 1930) (Prosthecochloris vibrioformis (strain DSM 265)).